The primary structure comprises 369 residues: UDP-3-O-(3-hydroxymyristoyl)glucosamine N-acyltransferase (369 aa).

Histidine 240 (proton acceptor) is an active-site residue.

It belongs to the transferase hexapeptide repeat family. LpxD subfamily. As to quaternary structure, homotrimer.

The catalysed reaction is a UDP-3-O-[(3R)-3-hydroxyacyl]-alpha-D-glucosamine + a (3R)-hydroxyacyl-[ACP] = a UDP-2-N,3-O-bis[(3R)-3-hydroxyacyl]-alpha-D-glucosamine + holo-[ACP] + H(+). The enzyme catalyses UDP-3-O-[(3R)-3-hydroxytetradecanoyl]-alpha-D-glucosamine + (3R)-hydroxytetradecanoyl-[ACP] = UDP-2-N,3-O-bis[(3R)-3-hydroxytetradecanoyl]-alpha-D-glucosamine + holo-[ACP] + H(+). The protein operates within glycolipid biosynthesis; lipid IV(A) biosynthesis; lipid IV(A) from (3R)-3-hydroxytetradecanoyl-[acyl-carrier-protein] and UDP-N-acetyl-alpha-D-glucosamine: step 3/6. Catalyzes the N-acylation of UDP-3-O-(hydroxytetradecanoyl)glucosamine using 3-hydroxytetradecanoyl-ACP as the acyl donor. Is involved in the biosynthesis of lipid A, a phosphorylated glycolipid that anchors the lipopolysaccharide to the outer membrane of the cell. The polypeptide is UDP-3-O-(3-hydroxymyristoyl)glucosamine N-acyltransferase (Blochmanniella floridana).